Here is an 837-residue protein sequence, read N- to C-terminus: Tuftelin-interacting protein 11 (837 aa).

Composition is skewed to basic and acidic residues over residues 1 to 13 (MSLS…GEGR) and 53 to 64 (VWAERDSDDERP). 3 disordered regions span residues 1–21 (MSLS…DDER), 53–72 (VWAE…KRAR), and 85–133 (LKKG…KGFA). The segment at 1–50 (MSLSHLYRDGEGRIDDDDDERENFEITDWDLQNEFNPNRQRHWQTKEEAT) is required for interaction with DHX15. Ser2, Ser59, and Ser98 each carry phosphoserine. The span at 91–102 (EEAELEDSDDEE) shows a compositional bias: acidic residues. Positions 103 to 116 (KPVKQDDFPKDFGP) are enriched in basic and acidic residues. Ser144 is modified (phosphoserine). The G-patch domain occupies 149 to 195 (TKGIGQKLLQKMGYVPGRGLGKNAQGIINPIEAKQRKGKGAVGAYGS). A disordered region spans residues 179 to 236 (IEAKQRKGKGAVGAYGSERTTQSMQDFPVVDSEEEAEEEFQKELSQWRKDPSGSKKKP). A Phosphoserine modification is found at Ser210. Residues 217 to 231 (EFQKELSQWRKDPSG) are compositionally biased toward basic and acidic residues. The short motif at 700-705 (VKDKFN) is the Nuclear localization signal element. The interval 710 to 734 (IMNRAVSSNVGAYMQPGARENIAYL) is required for nuclear speckle localization.

It belongs to the TFP11/STIP family. In terms of assembly, identified in the spliceosome C complex. Found in the Intron Large (IL) complex, a post-mRNA release spliceosomal complex containing the excised intron, U2, U5 and U6 snRNPs, and splicing factors. Interacts with TUFT1. Interacts with DHX15; indicative for a recruitment of DHX15 to the IL complex. Interacts with GCFC2.

It is found in the cytoplasm. It localises to the nucleus. Functionally, involved in pre-mRNA splicing, specifically in spliceosome disassembly during late-stage splicing events. Intron turnover seems to proceed through reactions in two lariat-intron associated complexes termed Intron Large (IL) and Intron Small (IS). In cooperation with DHX15 seems to mediate the transition of the U2, U5 and U6 snRNP-containing IL complex to the snRNP-free IS complex leading to efficient debranching and turnover of excised introns. May play a role in the differentiation of ameloblasts and odontoblasts or in the forming of the enamel extracellular matrix. The polypeptide is Tuftelin-interacting protein 11 (TFIP11) (Pan troglodytes (Chimpanzee)).